The sequence spans 312 residues: Malate dehydrogenase (312 aa).

Residues 7–13 (GAAGGIG) and Asp-34 contribute to the NAD(+) site. Substrate is bound by residues Arg-81 and Arg-87. Residues Asn-94 and 117–119 (ITN) contribute to the NAD(+) site. 2 residues coordinate substrate: Asn-119 and Arg-153. His-177 serves as the catalytic Proton acceptor. Met-227 contributes to the NAD(+) binding site.

The protein belongs to the LDH/MDH superfamily. MDH type 1 family. In terms of assembly, homodimer.

The enzyme catalyses (S)-malate + NAD(+) = oxaloacetate + NADH + H(+). Catalyzes the reversible oxidation of malate to oxaloacetate. The polypeptide is Malate dehydrogenase (Pectobacterium carotovorum subsp. carotovorum (strain PC1)).